The primary structure comprises 470 residues: Cysteine--tRNA ligase (470 aa).

Cysteine 27 serves as a coordination point for Zn(2+). The short motif at 29 to 39 is the 'HIGH' region element; the sequence is PTVYNFFHIGN. Zn(2+) is bound by residues cysteine 211, histidine 236, and glutamate 240. A 'KMSKS' region motif is present at residues 268 to 272; it reads KMSKS. Lysine 271 is an ATP binding site.

It belongs to the class-I aminoacyl-tRNA synthetase family. In terms of assembly, monomer. Zn(2+) serves as cofactor.

It localises to the cytoplasm. The enzyme catalyses tRNA(Cys) + L-cysteine + ATP = L-cysteinyl-tRNA(Cys) + AMP + diphosphate. This Clostridium botulinum (strain Eklund 17B / Type B) protein is Cysteine--tRNA ligase.